A 400-amino-acid chain; its full sequence is Phosphoglycerate kinase (400 aa).

Substrate-binding positions include 21 to 23 (DFN), Arg-36, 59 to 62 (HLGR), Arg-118, and Arg-151. ATP contacts are provided by residues Lys-201, Gly-293, Glu-324, and 353–356 (GGDS).

The protein belongs to the phosphoglycerate kinase family. In terms of assembly, monomer.

Its subcellular location is the cytoplasm. It catalyses the reaction (2R)-3-phosphoglycerate + ATP = (2R)-3-phospho-glyceroyl phosphate + ADP. It functions in the pathway carbohydrate degradation; glycolysis; pyruvate from D-glyceraldehyde 3-phosphate: step 2/5. In Fervidobacterium nodosum (strain ATCC 35602 / DSM 5306 / Rt17-B1), this protein is Phosphoglycerate kinase.